The primary structure comprises 117 residues: uncharacterized protein (117 aa).

2 consecutive transmembrane segments (helical) span residues 43 to 63 (APIMLVSLAAIVLLIYLLMLL) and 73 to 93 (AVQHVPMAVFALVCAYPVFIV).

Its subcellular location is the cell membrane. This is an uncharacterized protein from Bacillus subtilis (strain 168).